The sequence spans 218 residues: ATP phosphoribosyltransferase (218 aa).

Belongs to the ATP phosphoribosyltransferase family. Short subfamily. As to quaternary structure, heteromultimer composed of HisG and HisZ subunits.

Its subcellular location is the cytoplasm. It catalyses the reaction 1-(5-phospho-beta-D-ribosyl)-ATP + diphosphate = 5-phospho-alpha-D-ribose 1-diphosphate + ATP. The protein operates within amino-acid biosynthesis; L-histidine biosynthesis; L-histidine from 5-phospho-alpha-D-ribose 1-diphosphate: step 1/9. In terms of biological role, catalyzes the condensation of ATP and 5-phosphoribose 1-diphosphate to form N'-(5'-phosphoribosyl)-ATP (PR-ATP). Has a crucial role in the pathway because the rate of histidine biosynthesis seems to be controlled primarily by regulation of HisG enzymatic activity. This is ATP phosphoribosyltransferase from Burkholderia mallei (strain ATCC 23344).